The sequence spans 232 residues: MSVVKSIRAQIPPIHREGYPFIGAFALATLVLFLIWAPLGWIGTVLTIWCALFFRDPVRVTPVREGLVVAPADGRVSMVVQMIPPPALGLGDKPLPRVSIFMSVFNCHVNRSPVAGRVERIIYSPGKFINAELDKASEDNERNSMVISTPAGQIGVVQIAGLVARRIVSFVREGQTLAPGERFGLIRFGSRLDVYLPEGAKPLVSEGQTAIAGETVLADFNLGDGGRTYRAD.

S190 serves as the catalytic Schiff-base intermediate with substrate; via pyruvic acid. Position 190 is a pyruvic acid (Ser); by autocatalysis (S190).

Belongs to the phosphatidylserine decarboxylase family. PSD-A subfamily. Heterodimer of a large membrane-associated beta subunit and a small pyruvoyl-containing alpha subunit. Requires pyruvate as cofactor. Is synthesized initially as an inactive proenzyme. Formation of the active enzyme involves a self-maturation process in which the active site pyruvoyl group is generated from an internal serine residue via an autocatalytic post-translational modification. Two non-identical subunits are generated from the proenzyme in this reaction, and the pyruvate is formed at the N-terminus of the alpha chain, which is derived from the carboxyl end of the proenzyme. The post-translation cleavage follows an unusual pathway, termed non-hydrolytic serinolysis, in which the side chain hydroxyl group of the serine supplies its oxygen atom to form the C-terminus of the beta chain, while the remainder of the serine residue undergoes an oxidative deamination to produce ammonia and the pyruvoyl prosthetic group on the alpha chain.

It is found in the cell membrane. It carries out the reaction a 1,2-diacyl-sn-glycero-3-phospho-L-serine + H(+) = a 1,2-diacyl-sn-glycero-3-phosphoethanolamine + CO2. Its pathway is phospholipid metabolism; phosphatidylethanolamine biosynthesis; phosphatidylethanolamine from CDP-diacylglycerol: step 2/2. Functionally, catalyzes the formation of phosphatidylethanolamine (PtdEtn) from phosphatidylserine (PtdSer). This is Phosphatidylserine decarboxylase proenzyme from Rhodopseudomonas palustris (strain BisB5).